The following is a 1233-amino-acid chain: Anion exchange protein 3 (1233 aa).

A compositionally biased stretch (pro residues) spans 1–11 (MANGVIPPPGG). Disordered regions lie at residues 1-320 (MANG…RRPH) and 431-500 (DDKD…DGHR). Residues 1-709 (MANGVIPPPG…DLRDALHSQC (709 aa)) lie on the Cytoplasmic side of the membrane. The span at 58–73 (DPEKPSRSFSERDFAF) shows a compositional bias: basic and acidic residues. Composition is skewed to basic residues over residues 74-97 (HRHI…KLRR) and 104-113 (RHTRRKRKKE). Positions 137-153 (GEEEEEEEEEGESETEA) are enriched in acidic residues. 4 positions are modified to phosphoserine: Ser168, Ser171, Ser176, and Ser199. The segment covering 201-216 (QRSVSSSSPRARAPRV) has biased composition (low complexity). A compositionally biased stretch (basic and acidic residues) spans 268-290 (DDMKSHRLEDNPGVRRHLVKEPS). The residue at position 296 (Arg296) is an Omega-N-methylarginine. Residues 437–450 (SFPRNPSSSSVNSV) are compositionally biased toward low complexity. The segment covering 482-500 (HDPDAKERPLHMPGGDGHR) has biased composition (basic and acidic residues). 4 helical membrane passes run 710-732 (VAAV…GLLG), 738-775 (LMGV…LLVF), 795-817 (VWVG…TFLV), and 827-848 (IFAF…YKVF). A membrane (anion exchange) region spans residues 710–1233 (VAAVLFIYFA…DEYNELHMPV (524 aa)). Residue Asn874 is glycosylated (N-linked (GlcNAc...) asparagine). The helical transmembrane segment at 894-911 (ALLSLILMLGTFLIAFFL) threads the bilayer. The Cytoplasmic segment spans residues 912-926 (RKFRNSRFLGGKARR). 5 helical membrane passes run 927 to 947 (IIGD…DYSI), 981 to 1003 (PFPP…LIFM), 1029 to 1050 (LLLI…LTAA), 1084 to 1129 (VTGV…IQLS), and 1156 to 1192 (MHLF…TVPL). A lipid anchor (S-palmitoyl cysteine) is attached at Cys1166.

Belongs to the anion exchanger (TC 2.A.31) family.

The protein resides in the cell membrane. The enzyme catalyses hydrogencarbonate(in) + chloride(out) = hydrogencarbonate(out) + chloride(in). Functionally, sodium-independent anion exchanger which mediates the electroneutral exchange of chloride for bicarbonate ions across the cell membrane. May be involved in the regulation of intracellular pH, and the modulation of cardiac action potential. The chain is Anion exchange protein 3 (SLC4A3) from Oryctolagus cuniculus (Rabbit).